The following is a 763-amino-acid chain: Xaa-Pro dipeptidyl-peptidase (763 aa).

Residues S349, D469, and H499 each act as charge relay system in the active site.

This sequence belongs to the peptidase S15 family. As to quaternary structure, homodimer.

Its subcellular location is the cytoplasm. It catalyses the reaction Hydrolyzes Xaa-Pro-|- bonds to release unblocked, N-terminal dipeptides from substrates including Ala-Pro-|-p-nitroanilide and (sequentially) Tyr-Pro-|-Phe-Pro-|-Gly-Pro-|-Ile.. In terms of biological role, removes N-terminal dipeptides sequentially from polypeptides having unsubstituted N-termini provided that the penultimate residue is proline. This is Xaa-Pro dipeptidyl-peptidase from Streptococcus macedonicus (Streptococcus gallolyticus macedonicus).